The chain runs to 30 residues: Phospholemman-like protein (30 aa).

Belongs to the FXYD family. Phosphorylated by protein kinase a (PK-A) and protein kinase C (PK-C). Phosphorylated in response to insulin and adrenergic stimulation.

It localises to the microsome membrane. It is found in the endoplasmic reticulum membrane. Induces a hyperpolarization-activated chloride current when expressed in Xenopus oocytes. May have a functional role in muscle contraction. The sequence is that of Phospholemman-like protein from Squalus acanthias (Spiny dogfish).